Here is a 400-residue protein sequence, read N- to C-terminus: Jasmonate-induced oxygenase 1 (400 aa).

One can recognise a Fe2OG dioxygenase domain in the interval 248-349 (DVGACLRVNY…RVSLAFFYNP (102 aa)). Arginine 254 contributes to the jasmonate binding site. Residues asparagine 256 and tyrosine 258 each contribute to the 2-oxoglutarate site. Fe cation is bound by residues histidine 273, aspartate 275, and histidine 330. Arginine 340 and serine 342 together coordinate 2-oxoglutarate. Jasmonate contacts are provided by arginine 379 and arginine 383.

The protein belongs to the iron/ascorbate-dependent oxidoreductase family. L-ascorbate is required as a cofactor. Requires Fe(2+) as cofactor.

The catalysed reaction is jasmonate + 2-oxoglutarate + O2 = (1R,2R)-12-hydroxyjasmonate + succinate + CO2. 2-oxoglutarate-dependent dioxygenase involved in the oxidation of jasmonate (JA), a stress-induced phytohormone synthesized in response to attack by pathogens and herbivores, which triggers the activation of defense responses via the JA-mediated signaling pathway. Converts JA to 12-hydroxyjasmonate (12OH-JA), an inactive form of JA. Prevents over-accumulation of JA and indirectly its bioactive form JA-Ile under stress response. Acts as a negative regulator of JA-mediated defense signaling, by contributing to 12OH-JA accumulation, which represses JA defense responses upon infection by the fungal pathogen Botrytis cinerea and the herbivorous caterpillar Mamestra brassicae. This is Jasmonate-induced oxygenase 1 from Arabidopsis thaliana (Mouse-ear cress).